Here is a 126-residue protein sequence, read N- to C-terminus: Large ribosomal subunit protein bL12 (126 aa).

The protein belongs to the bacterial ribosomal protein bL12 family. In terms of assembly, homodimer. Part of the ribosomal stalk of the 50S ribosomal subunit. Forms a multimeric L10(L12)X complex, where L10 forms an elongated spine to which 2 to 4 L12 dimers bind in a sequential fashion. Binds GTP-bound translation factors.

Functionally, forms part of the ribosomal stalk which helps the ribosome interact with GTP-bound translation factors. Is thus essential for accurate translation. This chain is Large ribosomal subunit protein bL12, found in Legionella pneumophila (strain Paris).